Reading from the N-terminus, the 503-residue chain is Aminoaldehyde dehydrogenase 1, peroxisomal (503 aa).

3 residues coordinate Na(+): I28, D99, and L189. 238-245 (GSTMTGSK) serves as a coordination point for NAD(+). E260 serves as the catalytic Proton acceptor. C294 and E393 together coordinate NAD(+). The active-site Nucleophile is C294.

This sequence belongs to the aldehyde dehydrogenase family. Expressed in leaves, flowers and fruits.

It localises to the cytoplasm. The protein resides in the cytosol. The catalysed reaction is 4-aminobutanal + NAD(+) + H2O = 4-aminobutanoate + NADH + 2 H(+). It carries out the reaction 3-aminopropanal + NAD(+) + H2O = beta-alanine + NADH + 2 H(+). It functions in the pathway amine and polyamine biosynthesis; betaine biosynthesis via choline pathway; betaine from betaine aldehyde: step 1/1. Functionally, dehydrogenase that catalyzes the oxidation of several aminoaldehydes. Metabolizes and detoxifies aldehyde products of polyamine degradation to non-toxic amino acids. Catalyzes the oxidation of 4-aminobutanal and 3-aminopropanal to 4-aminobutanoate and beta-alanine, respectively. In Malus domestica (Apple), this protein is Aminoaldehyde dehydrogenase 1, peroxisomal.